The primary structure comprises 356 residues: Homoserine O-succinyltransferase (356 aa).

Catalysis depends on Cys146, which acts as the Acyl-thioester intermediate. Positions 167 and 196 each coordinate substrate. His239 acts as the Proton acceptor in catalysis. The active site involves Glu241. Residue Arg253 coordinates substrate.

The protein belongs to the MetA family.

Its subcellular location is the cytoplasm. It carries out the reaction L-homoserine + succinyl-CoA = O-succinyl-L-homoserine + CoA. Its pathway is amino-acid biosynthesis; L-methionine biosynthesis via de novo pathway; O-succinyl-L-homoserine from L-homoserine: step 1/1. Its function is as follows. Transfers a succinyl group from succinyl-CoA to L-homoserine, forming succinyl-L-homoserine. The chain is Homoserine O-succinyltransferase from Thioalkalivibrio nitratireducens (strain DSM 14787 / UNIQEM 213 / ALEN2).